The chain runs to 374 residues: Beta-lytic metalloendopeptidase (374 aa).

A signal peptide spans M1–A24. The propeptide occupies A25 to V195. A disordered region spans residues P128–Q187. The span at A148–V164 shows a compositional bias: basic residues. A disulfide bond links C261 and C307. H316 and H318 together coordinate Zn(2+). An intrachain disulfide couples C351 to C364.

It belongs to the peptidase M23A family. Zn(2+) is required as a cofactor.

It is found in the secreted. It catalyses the reaction Cleavage of N-acetylmuramoyl-|-Ala, and of the insulin B chain at 23-Gly-|-Phe-24 &gt; 18-Val-|-Cys(SO3H).. This chain is Beta-lytic metalloendopeptidase, found in Achromobacter lyticus.